We begin with the raw amino-acid sequence, 142 residues long: Large ribosomal subunit protein uL13 (142 aa).

The protein belongs to the universal ribosomal protein uL13 family. As to quaternary structure, part of the 50S ribosomal subunit.

Its function is as follows. This protein is one of the early assembly proteins of the 50S ribosomal subunit, although it is not seen to bind rRNA by itself. It is important during the early stages of 50S assembly. The sequence is that of Large ribosomal subunit protein uL13 from Burkholderia cenocepacia (strain ATCC BAA-245 / DSM 16553 / LMG 16656 / NCTC 13227 / J2315 / CF5610) (Burkholderia cepacia (strain J2315)).